Consider the following 270-residue polypeptide: Shikimate dehydrogenase (NADP(+)) (270 aa).

Shikimate-binding positions include 15-17 (SKS) and T62. K66 (proton acceptor) is an active-site residue. Shikimate is bound by residues N87 and D102. NADP(+)-binding positions include 127 to 131 (GAGGA), 151 to 156 (NRTVAR), and M214. Y216 provides a ligand contact to shikimate. Position 238 (G238) interacts with NADP(+).

This sequence belongs to the shikimate dehydrogenase family. As to quaternary structure, homodimer.

It carries out the reaction shikimate + NADP(+) = 3-dehydroshikimate + NADPH + H(+). The protein operates within metabolic intermediate biosynthesis; chorismate biosynthesis; chorismate from D-erythrose 4-phosphate and phosphoenolpyruvate: step 4/7. Involved in the biosynthesis of the chorismate, which leads to the biosynthesis of aromatic amino acids. Catalyzes the reversible NADPH linked reduction of 3-dehydroshikimate (DHSA) to yield shikimate (SA). The chain is Shikimate dehydrogenase (NADP(+)) from Alkalilimnicola ehrlichii (strain ATCC BAA-1101 / DSM 17681 / MLHE-1).